The primary structure comprises 98 residues: NADH-ubiquinone oxidoreductase chain 4L (98 aa).

3 helical membrane-spanning segments follow: residues 1-21 (MPFIYINILLAFFISFIGLLM), 29-49 (SLLCLEGMMLSLYILGTLLCL), and 61-81 (MILLVFAACEAAVGLALLVMV).

It belongs to the complex I subunit 4L family. As to quaternary structure, core subunit of respiratory chain NADH dehydrogenase (Complex I) which is composed of 45 different subunits.

The protein localises to the mitochondrion inner membrane. It carries out the reaction a ubiquinone + NADH + 5 H(+)(in) = a ubiquinol + NAD(+) + 4 H(+)(out). Core subunit of the mitochondrial membrane respiratory chain NADH dehydrogenase (Complex I) which catalyzes electron transfer from NADH through the respiratory chain, using ubiquinone as an electron acceptor. Part of the enzyme membrane arm which is embedded in the lipid bilayer and involved in proton translocation. This Dugong dugon (Dugong) protein is NADH-ubiquinone oxidoreductase chain 4L (MT-ND4L).